The chain runs to 282 residues: HTH-type transcriptional activator RhaR (282 aa).

The HTH araC/xylS-type domain occupies 179–277; it reads DKLITRLAAS…GMTPSQWRHL (99 aa). 2 DNA-binding regions (H-T-H motif) span residues 196–217 and 244–267; these read DKFCDEASCSERVLRQQFRQQT and ISDISTECGFEDSNYFSVVFTRET.

As to quaternary structure, binds DNA as a dimer.

It is found in the cytoplasm. Activates expression of the rhaSR operon in response to L-rhamnose. This chain is HTH-type transcriptional activator RhaR, found in Shigella dysenteriae serotype 1 (strain Sd197).